Consider the following 25-residue polypeptide: M-poneritoxin-Nc2a (25 aa).

This sequence belongs to the ponericin-L family. In terms of tissue distribution, expressed by the venom gland.

It localises to the secreted. It is found in the target cell membrane. Functionally, membrane-perturbating peptide with multiple activities. It is insecticidal, since it induces reversible paralysis in insects (L.cuprina) after 1 hour, but fails to kill them. It shows moderate antibacterial activity against some Gram-positive and Gram-negative bacteria. It is also antiparasitic, since it moderately inhibits the larval development of the major pathogenic nematode of ruminants (H.contortus, IC(50)=23.2 uM), but fails to reduce the motility of adult males of the other nematode B.malayi. It also shows moderate cytotoxic activity against HEK293 cells (EC(50)=48-57 uM) but does not induce hemolysis in human erythrocytes. It also causes a moderate increase in intracellular calcium concentration on neuronal and epithelial cell lines, which supports a non-specific membrane perturbation mechanism of action. The polypeptide is M-poneritoxin-Nc2a (Neoponera commutata (Large hunting ant)).